We begin with the raw amino-acid sequence, 412 residues long: Gamma-glutamyl phosphate reductase (412 aa).

The protein belongs to the gamma-glutamyl phosphate reductase family.

It is found in the cytoplasm. It carries out the reaction L-glutamate 5-semialdehyde + phosphate + NADP(+) = L-glutamyl 5-phosphate + NADPH + H(+). It participates in amino-acid biosynthesis; L-proline biosynthesis; L-glutamate 5-semialdehyde from L-glutamate: step 2/2. Functionally, catalyzes the NADPH-dependent reduction of L-glutamate 5-phosphate into L-glutamate 5-semialdehyde and phosphate. The product spontaneously undergoes cyclization to form 1-pyrroline-5-carboxylate. The protein is Gamma-glutamyl phosphate reductase of Aliarcobacter butzleri (strain RM4018) (Arcobacter butzleri).